Here is a 559-residue protein sequence, read N- to C-terminus: 3-aminoavenalumate diazotase (559 aa).

Ser181 is a Mg(2+) binding site. ATP is bound by residues Ala227, Gly332, and Ser336. Residue Glu337 coordinates Mg(2+). The ATP site is built by Asp416 and Arg437.

This sequence belongs to the ATP-dependent AMP-binding enzyme family. It depends on Mg(2+) as a cofactor.

The catalysed reaction is 3-aminoavenalumate + nitrite + ATP = 3-diazoavenalumate + AMP + diphosphate + H2O. It catalyses the reaction (E)-3-aminocoumarate + nitrite + ATP + H(+) = (E)-3-diazocoumarate + AMP + diphosphate + H2O. The enzyme catalyses 3-amino-4-hydroxybenzoate + nitrite + ATP + H(+) = 3-diazo-4-hydroxybenzoate + AMP + diphosphate + H2O. In terms of biological role, ligase involved in the biosynthesis of avenalumic acid (AVA). Catalyzes the diazotization of 3-aminoavenalumic acid (3-AAA) to 3-diazoavenalumic acid (3-DAA). It can also act on 3-aminocoumaric acid (3-ACA) and 3-amino-4-hydroxybenzoic acid (3,4-AHBA) with lower activity. This is 3-aminoavenalumate diazotase from Streptomyces sp.